The following is a 492-amino-acid chain: MVDVPRLMSTQHPDNATLPFFTAGDVIEGEDEIQEAYYVYSHLGCDEQMWDFEGKEGDEYAVKKLLSRYDEFFADHQLGTDVRLTVRGPNPDVEGSEAKILLEILESIPRSFDAARRFAGEYGLETTAPIFEVIVPMVTDADQLNAVHEYYERFVTGKADEAVWDGRTVEEWVGEFDPASITVIPLIEEREAMLAADDIVREYATAHDQDAVRVFLARSDPALNYGCLAADLINKVALQRLYEMSEATGVDVHPILGAGSAPFRGNLTPERAAATADAYSEVETFTVQSAFKYDYPVETVRDGVATLRDADLGAPPFPIDEARALAVIDRTADAYADQVDAIAGTVNRLSSYVPDRRARKLHVGLFGYAREVGENALPRAIGYTASLYAVGCPPTLLGAHALTDDDAAFVREAFPAYFDHLADAARYFNPRCTDVLDLDDDTLAAAVERVDVTPNSEHRAATDDAIDALQRGDDDALRSAIRRGARERQFLG.

The protein belongs to the PEPCase type 2 family. As to quaternary structure, homotetramer. Mg(2+) serves as cofactor.

It catalyses the reaction oxaloacetate + phosphate = phosphoenolpyruvate + hydrogencarbonate. Catalyzes the irreversible beta-carboxylation of phosphoenolpyruvate (PEP) to form oxaloacetate (OAA), a four-carbon dicarboxylic acid source for the tricarboxylic acid cycle. The polypeptide is Phosphoenolpyruvate carboxylase (Halobacterium salinarum (strain ATCC 29341 / DSM 671 / R1)).